We begin with the raw amino-acid sequence, 285 residues long: Bifunctional protein FolD (285 aa).

Residues 165–167 (GRS) and serine 190 contribute to the NADP(+) site.

This sequence belongs to the tetrahydrofolate dehydrogenase/cyclohydrolase family. In terms of assembly, homodimer.

It catalyses the reaction (6R)-5,10-methylene-5,6,7,8-tetrahydrofolate + NADP(+) = (6R)-5,10-methenyltetrahydrofolate + NADPH. It carries out the reaction (6R)-5,10-methenyltetrahydrofolate + H2O = (6R)-10-formyltetrahydrofolate + H(+). It functions in the pathway one-carbon metabolism; tetrahydrofolate interconversion. Its function is as follows. Catalyzes the oxidation of 5,10-methylenetetrahydrofolate to 5,10-methenyltetrahydrofolate and then the hydrolysis of 5,10-methenyltetrahydrofolate to 10-formyltetrahydrofolate. The sequence is that of Bifunctional protein FolD from Burkholderia ambifaria (strain ATCC BAA-244 / DSM 16087 / CCUG 44356 / LMG 19182 / AMMD) (Burkholderia cepacia (strain AMMD)).